Here is a 527-residue protein sequence, read N- to C-terminus: Rhesus-like glycoprotein A (527 aa).

At 1–18 (MTHNDDDHKWVTTKRKEP) the chain is on the cytoplasmic side. Residues 19 to 39 (IFFTVILFIFQIFMIICFAAL) traverse the membrane as a helical segment. Residues 40-70 (TGYDTNKNYTGSENPDEFKGGEVQERVNNFY) lie on the Extracellular side of the membrane. Asn-47 carries N-linked (GlcNAc...) asparagine glycosylation. The chain crosses the membrane as a helical span at residues 71–91 (GYFRDINIMIFFGFGFLMTFL). Topologically, residues 92 to 99 (RRYGYSAL) are cytoplasmic. A helical transmembrane segment spans residues 100–120 (GYTFIISALVSQWSVLLNGFF). Over 121–141 (EAWSHSNKHGEFPSTWEFSMD) the chain is Extracellular. The chain crosses the membrane as a helical span at residues 142-162 (SLLQGFFCSGSVMISYGAILG). Over 163-166 (RVTP) the chain is Cytoplasmic. A helical membrane pass occupies residues 167–187 (LHMLIMGIIEPIFFFLNVFIG). The Extracellular portion of the chain corresponds to 188–195 (EMNLEAID). A helical transmembrane segment spans residues 196–216 (VGGGMYIHLFGSVFGLTVAWF). The Cytoplasmic segment spans residues 217-236 (LTDRKSKECTDNAPSYSGDN). The chain crosses the membrane as a helical span at residues 237–257 (FAMAGTLFLWMMWPSFNAAIA). Topologically, residues 258-263 (PLGEPQ) are extracellular. Residues 264-284 (FRAIANTFLSLTGSTVATFIV) form a helical membrane-spanning segment. Residues 285–299 (SRLFSHLGNKLDMVH) lie on the Cytoplasmic side of the membrane. The chain crosses the membrane as a helical span at residues 300 to 319 (VQNSSLAGGVVQGCIAHMNI). Residues 320 to 321 (NP) are Extracellular-facing. The helical transmembrane segment at 322-342 (GGAIAMGFIAGTISVCGYLFI) threads the bilayer. The Cytoplasmic portion of the chain corresponds to 343 to 357 (TPKVQRKLHIQDTCG). A helical membrane pass occupies residues 358–378 (ILNLHCIPGFLGSIAAIFAAI). Over 379–406 (KGLNNPNMYSKVEFEQIFRAGDSQASAN) the chain is Extracellular. A helical membrane pass occupies residues 407–427 (LIATMVSIGLGIVGGLLVGVI). Over 428–527 (LLQLKKIKGL…EEDEFKQEPI (100 aa)) the chain is Cytoplasmic. Residues 471 to 527 (SEDTAGGDDEEEGVGKEHGAVEMGKHNRIVQPKQDNKYHKQLPSDDEEEDEFKQEPI) are disordered. Residues 483–495 (GVGKEHGAVEMGK) are compositionally biased toward basic and acidic residues. Residues 514-527 (SDDEEEDEFKQEPI) show a composition bias toward acidic residues.

The protein belongs to the ammonium transporter (TC 2.A.49) family. Rh subfamily. Interacts with ap1g1.

It localises to the contractile vacuole. It is found in the membrane. Functionally, may be a carbon dioxide/bicarbonate transporter. The polypeptide is Rhesus-like glycoprotein A (rhgA) (Dictyostelium discoideum (Social amoeba)).